The primary structure comprises 254 residues: MTPGIRPLVAGNWKMNGKGESLTELRAIAAGLSSDLGRKLDAVICVPATLLSRAAETLEGETVGLGGQDAHFKTSGAHTGDISPEMLKEAGATHVILGHSERRTDHHESNKLICAKTEAAWAAGLVAIVCVGETASERKAERALDVIGDQLSGSLPDGVTAENTIIAYEPIWAIGTGLTPTVQDVRAAHAFMREQLIERFGAKGAHLRLLYGGSVKPSNAAELLGVADVDGALVGGASLKAADFLAICETYRNL.

12-14 serves as a coordination point for substrate; the sequence is NWK. Histidine 99 (electrophile) is an active-site residue. Glutamate 169 serves as the catalytic Proton acceptor. Substrate contacts are provided by residues glycine 175, serine 214, and 235-236; that span reads GG.

The protein belongs to the triosephosphate isomerase family. In terms of assembly, homodimer.

Its subcellular location is the cytoplasm. It carries out the reaction D-glyceraldehyde 3-phosphate = dihydroxyacetone phosphate. It functions in the pathway carbohydrate biosynthesis; gluconeogenesis. It participates in carbohydrate degradation; glycolysis; D-glyceraldehyde 3-phosphate from glycerone phosphate: step 1/1. Functionally, involved in the gluconeogenesis. Catalyzes stereospecifically the conversion of dihydroxyacetone phosphate (DHAP) to D-glyceraldehyde-3-phosphate (G3P). This is Triosephosphate isomerase from Brucella melitensis biotype 1 (strain ATCC 23456 / CCUG 17765 / NCTC 10094 / 16M).